Consider the following 1073-residue polypeptide: Carbamoyl phosphate synthase large chain (1073 aa).

The tract at residues 2 to 403 (PKRTDIKSIL…SVQKALRGLE (402 aa)) is carboxyphosphate synthetic domain. ATP is bound by residues Arg-129, Arg-169, Gly-175, Gly-176, Glu-208, Leu-210, Glu-215, Gly-241, Val-242, His-243, Gln-285, and Glu-299. The ATP-grasp 1 domain maps to 133-328 (DKAMKDIGLA…IAKIAAKLAV (196 aa)). Mg(2+) is bound by residues Gln-285, Glu-299, and Asn-301. Mn(2+) contacts are provided by Gln-285, Glu-299, and Asn-301. Residues 404 to 553 (VGATGFDPKL…YSTYEEECEA (150 aa)) form an oligomerization domain region. Residues 554 to 935 (NPSSREKIMI…AFAKAQLGAS (382 aa)) are carbamoyl phosphate synthetic domain. Residues 678–869 (QQMVQRLNLR…LAKVAARVMA (192 aa)) enclose the ATP-grasp 2 domain. 10 residues coordinate ATP: Arg-714, His-753, Leu-755, Glu-760, Gly-785, Val-786, His-787, Ser-788, Gln-828, and Glu-840. Residues Gln-828, Glu-840, and Asn-842 each contribute to the Mg(2+) site. Residues Gln-828, Glu-840, and Asn-842 each contribute to the Mn(2+) site. Positions 936 to 1073 (EILPTAGCAF…LQDLHAGIKA (138 aa)) constitute an MGS-like domain. The tract at residues 936-1073 (EILPTAGCAF…LQDLHAGIKA (138 aa)) is allosteric domain.

The protein belongs to the CarB family. In terms of assembly, composed of two chains; the small (or glutamine) chain promotes the hydrolysis of glutamine to ammonia, which is used by the large (or ammonia) chain to synthesize carbamoyl phosphate. Tetramer of heterodimers (alpha,beta)4. Requires Mg(2+) as cofactor. Mn(2+) is required as a cofactor.

It carries out the reaction hydrogencarbonate + L-glutamine + 2 ATP + H2O = carbamoyl phosphate + L-glutamate + 2 ADP + phosphate + 2 H(+). The catalysed reaction is hydrogencarbonate + NH4(+) + 2 ATP = carbamoyl phosphate + 2 ADP + phosphate + 2 H(+). The protein operates within amino-acid biosynthesis; L-arginine biosynthesis; carbamoyl phosphate from bicarbonate: step 1/1. It functions in the pathway pyrimidine metabolism; UMP biosynthesis via de novo pathway; (S)-dihydroorotate from bicarbonate: step 1/3. Functionally, large subunit of the glutamine-dependent carbamoyl phosphate synthetase (CPSase). CPSase catalyzes the formation of carbamoyl phosphate from the ammonia moiety of glutamine, carbonate, and phosphate donated by ATP, constituting the first step of 2 biosynthetic pathways, one leading to arginine and/or urea and the other to pyrimidine nucleotides. The large subunit (synthetase) binds the substrates ammonia (free or transferred from glutamine from the small subunit), hydrogencarbonate and ATP and carries out an ATP-coupled ligase reaction, activating hydrogencarbonate by forming carboxy phosphate which reacts with ammonia to form carbamoyl phosphate. The sequence is that of Carbamoyl phosphate synthase large chain from Pseudomonas aeruginosa (strain ATCC 15692 / DSM 22644 / CIP 104116 / JCM 14847 / LMG 12228 / 1C / PRS 101 / PAO1).